The following is a 420-amino-acid chain: MDGTDVTMLMREIGVRARAAAAELAFAEPSRKEEALNAAAEAMLARSDEILEANGRDLAFGAEKGLTPAMMDRLKLDAARIDGIVEGLRAVAGQPDPVGQVIAEWDRPSGLHIRRVRTPLGVVGVIYESRPNVTADAGALCLKSGNAVILRGGSESFHSSGAIHAALQDGLRQAGLPVDAIQRVPTRDRAAVAEMLRMVEHIDVIVPRGGKGLVGLVQAEARVPVFAHLEGICHVYADGDADLEKARRVVLNAKTRRTGICGSAECLLIDRAFLAKHGPVLIEDLLKAGVEVRAEGELAQVPGTVPAQPEDFGREFLDMIIAAKVVDGVDEAIAHIRRYGSSHTESILTENDATAERFFRRLDSAILMRNASTQFADGGEFGMGAEIGIATGKMHARGPVGAEQLTSFKYLVTGDGTIRA.

This sequence belongs to the gamma-glutamyl phosphate reductase family.

It is found in the cytoplasm. The catalysed reaction is L-glutamate 5-semialdehyde + phosphate + NADP(+) = L-glutamyl 5-phosphate + NADPH + H(+). The protein operates within amino-acid biosynthesis; L-proline biosynthesis; L-glutamate 5-semialdehyde from L-glutamate: step 2/2. Its function is as follows. Catalyzes the NADPH-dependent reduction of L-glutamate 5-phosphate into L-glutamate 5-semialdehyde and phosphate. The product spontaneously undergoes cyclization to form 1-pyrroline-5-carboxylate. In Cereibacter sphaeroides (strain ATCC 17029 / ATH 2.4.9) (Rhodobacter sphaeroides), this protein is Gamma-glutamyl phosphate reductase.